A 376-amino-acid chain; its full sequence is N6-methyladenosine RNA methyltransferase MTA1 (376 aa).

The interval 53-78 (TRRLISSPPPETPFVTPEPKNGPSPL) is disordered.

Belongs to the MT-A70-like family.

The catalysed reaction is an adenosine in mRNA + S-adenosyl-L-methionine = an N(6)-methyladenosine in mRNA + S-adenosyl-L-homocysteine + H(+). Its function is as follows. N6-methyladenosine RNA methyltransferase that plays a crucial role in fungal phenotypic traits, virulence, and stress tolerance. Mediates the methylation of mRNAs to produce N6-methyladenosine (m6A)-containing mRNAs. M6A is a modification present at internal sites of mRNAs and some non-coding RNAs and plays a role in mRNA stability and processing. Required for appressorium turgor pressure and regulates autophagosome formation during appressorium formation stage. Specifically, mediates the stability of ATG8 mRNA in a m6A-dependent manner via modification of the m6A site A982 located in 3'UTR region. The polypeptide is N6-methyladenosine RNA methyltransferase MTA1 (Pyricularia oryzae (strain 70-15 / ATCC MYA-4617 / FGSC 8958) (Rice blast fungus)).